The sequence spans 547 residues: Chaperonin GroEL (547 aa).

ATP is bound by residues 30 to 33, K51, 87 to 91, G415, 479 to 481, and D495; these read TLGP, DGTTT, and NAA.

It belongs to the chaperonin (HSP60) family. In terms of assembly, forms a cylinder of 14 subunits composed of two heptameric rings stacked back-to-back. Interacts with the co-chaperonin GroES.

Its subcellular location is the cytoplasm. The catalysed reaction is ATP + H2O + a folded polypeptide = ADP + phosphate + an unfolded polypeptide.. Together with its co-chaperonin GroES, plays an essential role in assisting protein folding. The GroEL-GroES system forms a nano-cage that allows encapsulation of the non-native substrate proteins and provides a physical environment optimized to promote and accelerate protein folding. The protein is Chaperonin GroEL of Cupriavidus taiwanensis (strain DSM 17343 / BCRC 17206 / CCUG 44338 / CIP 107171 / LMG 19424 / R1) (Ralstonia taiwanensis (strain LMG 19424)).